Reading from the N-terminus, the 66-residue chain is Large ribosomal subunit protein uL29 (66 aa).

This sequence belongs to the universal ribosomal protein uL29 family.

The sequence is that of Large ribosomal subunit protein uL29 from Bacillus mycoides (strain KBAB4) (Bacillus weihenstephanensis).